Reading from the N-terminus, the 630-residue chain is tRNA uridine 5-carboxymethylaminomethyl modification enzyme MnmG (630 aa).

An FAD-binding site is contributed by 13 to 18; sequence GGGHAG. 273-287 is an NAD(+) binding site; the sequence is GPRYCPSIEDKIHRF.

Belongs to the MnmG family. In terms of assembly, homodimer. Heterotetramer of two MnmE and two MnmG subunits. FAD serves as cofactor.

The protein localises to the cytoplasm. In terms of biological role, NAD-binding protein involved in the addition of a carboxymethylaminomethyl (cmnm) group at the wobble position (U34) of certain tRNAs, forming tRNA-cmnm(5)s(2)U34. The chain is tRNA uridine 5-carboxymethylaminomethyl modification enzyme MnmG from Pseudomonas aeruginosa (strain ATCC 15692 / DSM 22644 / CIP 104116 / JCM 14847 / LMG 12228 / 1C / PRS 101 / PAO1).